A 296-amino-acid polypeptide reads, in one-letter code: Elongation factor Ts (296 aa).

Positions threonine 79–valine 82 are involved in Mg(2+) ion dislocation from EF-Tu.

This sequence belongs to the EF-Ts family.

It localises to the cytoplasm. Functionally, associates with the EF-Tu.GDP complex and induces the exchange of GDP to GTP. It remains bound to the aminoacyl-tRNA.EF-Tu.GTP complex up to the GTP hydrolysis stage on the ribosome. This Acholeplasma laidlawii (strain PG-8A) protein is Elongation factor Ts.